Consider the following 132-residue polypeptide: Pro-MCH 2 (132 aa).

The first 24 residues, 1–24, serve as a signal peptide directing secretion; sequence MRDSVLSVIFALALFLECYTPSMA. Cys120 and Cys129 are joined by a disulfide.

Belongs to the melanin-concentrating hormone family. As to expression, pituitary gland. Produced in neurons of lateral basal hypothalamus which project both to the brain and to the neural lobe of the pituitary gland from where MCH is released.

In terms of biological role, plays a role in skin pigmentation by antagonizing the action of melanotropin alpha. Induces melanin concentration within the melanophores. May participate in the control of the hypothalamo-pituitary adrenal gland axis by inhibiting the release of ACTH. In Oncorhynchus keta (Chum salmon), this protein is Pro-MCH 2 (mch2).